A 281-amino-acid polypeptide reads, in one-letter code: Nucleotide-binding protein Daro_0070 (281 aa).

8-15 provides a ligand contact to ATP; it reads GLSGSGKS. Position 57–60 (57–60) interacts with GTP; it reads DARS.

This sequence belongs to the RapZ-like family.

Displays ATPase and GTPase activities. In Dechloromonas aromatica (strain RCB), this protein is Nucleotide-binding protein Daro_0070.